The chain runs to 43 residues: uncharacterized protein (43 aa).

Residues 1–16 (MKLLNFILIIFNALKS) form the signal peptide. A glycan (N-linked (GlcNAc...) asparagine; by host) is linked at asparagine 37.

This is an uncharacterized protein from Acheta domesticus (House cricket).